A 151-amino-acid polypeptide reads, in one-letter code: Large ribosomal subunit protein bL9 (151 aa).

This sequence belongs to the bacterial ribosomal protein bL9 family.

Its function is as follows. Binds to the 23S rRNA. The sequence is that of Large ribosomal subunit protein bL9 from Lactobacillus delbrueckii subsp. bulgaricus (strain ATCC BAA-365 / Lb-18).